We begin with the raw amino-acid sequence, 311 residues long: Glycine--tRNA ligase alpha subunit (311 aa).

The protein belongs to the class-II aminoacyl-tRNA synthetase family. Tetramer of two alpha and two beta subunits.

It localises to the cytoplasm. It carries out the reaction tRNA(Gly) + glycine + ATP = glycyl-tRNA(Gly) + AMP + diphosphate. The polypeptide is Glycine--tRNA ligase alpha subunit (Brucella anthropi (strain ATCC 49188 / DSM 6882 / CCUG 24695 / JCM 21032 / LMG 3331 / NBRC 15819 / NCTC 12168 / Alc 37) (Ochrobactrum anthropi)).